We begin with the raw amino-acid sequence, 469 residues long: Glutamate--tRNA ligase (469 aa).

A 'HIGH' region motif is present at residues 9-19 (PSPTGFLHVGG). Positions 98, 100, 125, and 127 each coordinate Zn(2+). Positions 236 to 240 (KLSKR) match the 'KMSKS' region motif. Position 239 (lysine 239) interacts with ATP.

The protein belongs to the class-I aminoacyl-tRNA synthetase family. Glutamate--tRNA ligase type 1 subfamily. In terms of assembly, monomer. It depends on Zn(2+) as a cofactor.

The protein resides in the cytoplasm. The enzyme catalyses tRNA(Glu) + L-glutamate + ATP = L-glutamyl-tRNA(Glu) + AMP + diphosphate. Its function is as follows. Catalyzes the attachment of glutamate to tRNA(Glu) in a two-step reaction: glutamate is first activated by ATP to form Glu-AMP and then transferred to the acceptor end of tRNA(Glu). This Shewanella loihica (strain ATCC BAA-1088 / PV-4) protein is Glutamate--tRNA ligase.